Reading from the N-terminus, the 185-residue chain is ATP synthase subunit b (185 aa).

A helical membrane pass occupies residues Leu-26–Phe-46.

The protein belongs to the ATPase B chain family. F-type ATPases have 2 components, F(1) - the catalytic core - and F(0) - the membrane proton channel. F(1) has five subunits: alpha(3), beta(3), gamma(1), delta(1), epsilon(1). F(0) has three main subunits: a(1), b(2) and c(10-14). The alpha and beta chains form an alternating ring which encloses part of the gamma chain. F(1) is attached to F(0) by a central stalk formed by the gamma and epsilon chains, while a peripheral stalk is formed by the delta and b chains.

The protein localises to the cell membrane. Functionally, f(1)F(0) ATP synthase produces ATP from ADP in the presence of a proton or sodium gradient. F-type ATPases consist of two structural domains, F(1) containing the extramembraneous catalytic core and F(0) containing the membrane proton channel, linked together by a central stalk and a peripheral stalk. During catalysis, ATP synthesis in the catalytic domain of F(1) is coupled via a rotary mechanism of the central stalk subunits to proton translocation. Component of the F(0) channel, it forms part of the peripheral stalk, linking F(1) to F(0). This is ATP synthase subunit b from Renibacterium salmoninarum (strain ATCC 33209 / DSM 20767 / JCM 11484 / NBRC 15589 / NCIMB 2235).